We begin with the raw amino-acid sequence, 311 residues long: 4-hydroxy-tetrahydrodipicolinate synthase (311 aa).

Position 49 (Thr49) interacts with pyruvate. Residue Tyr138 is the Proton donor/acceptor of the active site. The active-site Schiff-base intermediate with substrate is the Lys166. A pyruvate-binding site is contributed by Ile207.

This sequence belongs to the DapA family. In terms of assembly, homotetramer; dimer of dimers.

Its subcellular location is the cytoplasm. The catalysed reaction is L-aspartate 4-semialdehyde + pyruvate = (2S,4S)-4-hydroxy-2,3,4,5-tetrahydrodipicolinate + H2O + H(+). It participates in amino-acid biosynthesis; L-lysine biosynthesis via DAP pathway; (S)-tetrahydrodipicolinate from L-aspartate: step 3/4. Catalyzes the condensation of (S)-aspartate-beta-semialdehyde [(S)-ASA] and pyruvate to 4-hydroxy-tetrahydrodipicolinate (HTPA). This Lactobacillus acidophilus (strain ATCC 700396 / NCK56 / N2 / NCFM) protein is 4-hydroxy-tetrahydrodipicolinate synthase.